The primary structure comprises 203 residues: Ribosome-binding factor A (203 aa).

Over residues 119-141 (LAEVRRDARPAGDEDPYRRPRTV) the composition is skewed to basic and acidic residues. The tract at residues 119–203 (LAEVRRDARP…SPGGDPTAGR (85 aa)) is disordered. Over residues 142–169 (DEDDEDEDEDLVDEFDEFDRVEELDADA) the composition is skewed to acidic residues.

Belongs to the RbfA family. In terms of assembly, monomer. Binds 30S ribosomal subunits, but not 50S ribosomal subunits or 70S ribosomes.

The protein resides in the cytoplasm. One of several proteins that assist in the late maturation steps of the functional core of the 30S ribosomal subunit. Associates with free 30S ribosomal subunits (but not with 30S subunits that are part of 70S ribosomes or polysomes). Required for efficient processing of 16S rRNA. May interact with the 5'-terminal helix region of 16S rRNA. This is Ribosome-binding factor A from Frankia alni (strain DSM 45986 / CECT 9034 / ACN14a).